Reading from the N-terminus, the 222-residue chain is MSNLIEIKSKSTHTATVIFLHGLMDTGKGWETRMENIISMGGLDHIKFVLPTAPTIPISINFGNKGTAWCNVTAFYPGSEEDLIGLEKSMKLVEALIEEEIKNGIPAERIILSGFSQGGALTLYTGYQSKHKLAALITLSGFSPSLSLPSKIKPENKDIPLTMFHGTDDKVVNCKWGELSHKSYLKVGIKNSQFISITNLDHSSNEFELKQVHDLIEKYLPK.

Residues S116, D169, and H202 each act as charge relay system in the active site.

It belongs to the AB hydrolase superfamily. AB hydrolase 2 family.

It is found in the cytoplasm. It localises to the nucleus. The catalysed reaction is S-hexadecanoyl-L-cysteinyl-[protein] + H2O = L-cysteinyl-[protein] + hexadecanoate + H(+). Its function is as follows. Hydrolyzes fatty acids from S-acylated cysteine residues in proteins with a strong preference for palmitoylated G-alpha proteins over other acyl substrates. Mediates the deacylation of G-alpha proteins such as GPA1 in vivo, but has weak or no activity toward palmitoylated Ras proteins. Has weak lysophospholipase activity in vitro; however such activity may not exist in vivo. The protein is Acyl-protein thioesterase 1 homolog 2 of Dictyostelium discoideum (Social amoeba).